The sequence spans 185 residues: Large ribosomal subunit protein uL5 (185 aa).

It belongs to the universal ribosomal protein uL5 family. As to quaternary structure, part of the 50S ribosomal subunit; part of the 5S rRNA/L5/L18/L25 subcomplex. Contacts the 5S rRNA and the P site tRNA. Forms a bridge to the 30S subunit in the 70S ribosome.

Functionally, this is one of the proteins that bind and probably mediate the attachment of the 5S RNA into the large ribosomal subunit, where it forms part of the central protuberance. In the 70S ribosome it contacts protein S13 of the 30S subunit (bridge B1b), connecting the 2 subunits; this bridge is implicated in subunit movement. Contacts the P site tRNA; the 5S rRNA and some of its associated proteins might help stabilize positioning of ribosome-bound tRNAs. The polypeptide is Large ribosomal subunit protein uL5 (Bartonella quintana (strain Toulouse) (Rochalimaea quintana)).